Here is a 281-residue protein sequence, read N- to C-terminus: INSIG family protein (281 aa).

At 1–93 (MSRKEIYEPR…FIDYSSLITF (93 aa)) the chain is on the cytoplasmic side. Ser28 bears the Phosphoserine mark. The helical transmembrane segment at 94-120 (FCKLCVIFGLGFVFTYLAEQIVQDAKL) threads the bilayer. The Lumenal portion of the chain corresponds to 121–134 (PLLTVNLKSWKFEP). A helical transmembrane segment spans residues 135-159 (PWPAIFGFVAVILGLSYRRMDTKYP). The Cytoplasmic portion of the chain corresponds to 160–170 (LGAAPLRPSQS). The chain crosses the membrane as a helical span at residues 171-186 (SKWQWISRYLAAFATL). Topologically, residues 187–189 (LLS) are lumenal. A helical membrane pass occupies residues 190–215 (MKKLLFISNSHSIVALVASSASIWYI). Residues 216-221 (FDRSRN) are Cytoplasmic-facing. Residues 222-256 (GIILSTITSVLGSILYYNLVDTSKIELNGVEFPEI) traverse the membrane as a helical segment. Residues 257–260 (QFRL) are Lumenal-facing. Residues 261-281 (WIPMILFSASTIVGNAGRLLF) form a helical membrane-spanning segment.

This sequence belongs to the INSIG family.

It localises to the endoplasmic reticulum membrane. The polypeptide is INSIG family protein (ins1) (Schizosaccharomyces pombe (strain 972 / ATCC 24843) (Fission yeast)).